Here is a 668-residue protein sequence, read N- to C-terminus: Protein PLASTID TRANSCRIPTIONALLY ACTIVE 10 (668 aa).

The N-terminal 40 residues, 1–40 (MQICQTKLNFTFPNPTNPNFCKPKALQWSPPRRISLLPCR), are a transit peptide targeting the chloroplast. The S1 motif domain maps to 272–340 (GMVCEGTVTT…YRFRFPLELR (69 aa)). The segment covering 362-391 (RDGDTNPDEIRRDCGRPPEPRKDPGSKPEE) has biased composition (basic and acidic residues). Positions 362 to 394 (RDGDTNPDEIRRDCGRPPEPRKDPGSKPEEEGL) are disordered. Serine 434 is subject to Phosphoserine. Positions 611-668 (KRKEGSTLASQEEETESEEEEEDDDDFDDFDYSILSDESSIGYSEQQPLVNGTQVLTD) are disordered. Residues 621-641 (QEEETESEEEEEDDDDFDDFD) are compositionally biased toward acidic residues. Over residues 646 to 668 (SDESSIGYSEQQPLVNGTQVLTD) the composition is skewed to polar residues.

In terms of assembly, component of the transcriptionally active chromosome (TAC) complexes. Interacts with PTAC7.

It localises to the plastid. The protein localises to the chloroplast. This is Protein PLASTID TRANSCRIPTIONALLY ACTIVE 10 from Arabidopsis thaliana (Mouse-ear cress).